Reading from the N-terminus, the 244-residue chain is 3-deoxy-manno-octulosonate cytidylyltransferase (244 aa).

The protein belongs to the KdsB family.

It localises to the cytoplasm. The enzyme catalyses 3-deoxy-alpha-D-manno-oct-2-ulosonate + CTP = CMP-3-deoxy-beta-D-manno-octulosonate + diphosphate. The protein operates within nucleotide-sugar biosynthesis; CMP-3-deoxy-D-manno-octulosonate biosynthesis; CMP-3-deoxy-D-manno-octulosonate from 3-deoxy-D-manno-octulosonate and CTP: step 1/1. It functions in the pathway bacterial outer membrane biogenesis; lipopolysaccharide biosynthesis. Its function is as follows. Activates KDO (a required 8-carbon sugar) for incorporation into bacterial lipopolysaccharide in Gram-negative bacteria. The chain is 3-deoxy-manno-octulosonate cytidylyltransferase from Ruthia magnifica subsp. Calyptogena magnifica.